The chain runs to 502 residues: Sodium/proline symporter (502 aa).

Helical transmembrane passes span 6 to 26 (PMLVTFCVYIFGMILIGFIAW), 42 to 62 (LGPFVTALSAGASDMSGWLLM), 68 to 88 (IFLSGISESWIAIGLTLGAWI), 127 to 147 (IISALVILLFFTIYCASGIVA), 163 to 183 (ALWAGAAATIIYTFIGGFLAV), 192 to 212 (SLMIFALILTPVMVIVGVGGF), 235 to 255 (FVAIISLMGWGLGYFGQPHIL), 276 to 296 (TWMILCLAGAVAVGFFGIAYF), 320 to 340 (ILFNPWIAGVLLSAILAAVMS), 371 to 391 (LVWVGRVMVLVVALIAIALAA), 398 to 418 (LGLVSYAWAGFGAAFGPVVLF), 430 to 450 (ALAGMIIGAVTVIVWKQYGWL), and 452 to 472 (LYEIIPGFIFGSLGIVIFSLL).

It belongs to the sodium:solute symporter (SSF) (TC 2.A.21) family.

Its subcellular location is the cell inner membrane. The catalysed reaction is L-proline(in) + Na(+)(in) = L-proline(out) + Na(+)(out). In terms of biological role, catalyzes the sodium-dependent uptake of extracellular L-proline. This chain is Sodium/proline symporter, found in Salmonella typhimurium (strain LT2 / SGSC1412 / ATCC 700720).